We begin with the raw amino-acid sequence, 472 residues long: Phenylalanine--tRNA ligase, mitochondrial (472 aa).

Substrate contacts are provided by residues 157-160, Arg179, 186-188, and 193-195; these read SAHQ, QHY, and QLE. N6-acetyllysine is present on Lys202. Residues Glu287 and Phe312 each contribute to the substrate site. The 93-residue stretch at 379–471 folds into the FDX-ACB domain; it reads SKYPAVFNDI…AVQLLGVEGR (93 aa).

This sequence belongs to the class-II aminoacyl-tRNA synthetase family. In terms of assembly, monomer. In terms of tissue distribution, mainly expressed in the Purkinje cell of cerebellum.

It localises to the mitochondrion matrix. Its subcellular location is the mitochondrion. It catalyses the reaction tRNA(Phe) + L-phenylalanine + ATP = L-phenylalanyl-tRNA(Phe) + AMP + diphosphate + H(+). Its function is as follows. Is responsible for the charging of tRNA(Phe) with phenylalanine in mitochondrial translation. To a lesser extent, also catalyzes direct attachment of m-Tyr (an oxidized version of Phe) to tRNA(Phe), thereby opening the way for delivery of the misacylated tRNA to the ribosome and incorporation of ROS-damaged amino acid into proteins. The chain is Phenylalanine--tRNA ligase, mitochondrial (Fars2) from Rattus norvegicus (Rat).